Consider the following 187-residue polypeptide: High affinity copper uptake protein 1 (187 aa).

Residues 1-65 (MRMNHMEMHH…SSLVINTPGE (65 aa)) are Extracellular-facing. The Bis-His motif motif lies at 9–10 (HH). Asparagine 19 is a glycosylation site (N-linked (GlcNAc...) asparagine). O-linked (GalNAc...) threonine glycosylation is present at threonine 30. The chain crosses the membrane as a helical span at residues 66–86 (MAGAFVAVFLLAMFYEGLKIA). Residues 87–129 (REGLLRKSQVSIRYNSMPVPGPNGTILMETHKTVGQQMLSFPH) lie on the Cytoplasmic side of the membrane. Position 111 is a phosphothreonine (threonine 111). The helical transmembrane segment at 130–150 (LLQTVLHIIQVVISYFLMLIF) threads the bilayer. The Extracellular portion of the chain corresponds to 151 to 153 (MTY). Residues 154–174 (NGYLCIAVAAGAGTGYFLFSW) form a helical membrane-spanning segment. Over 175-187 (KKAVVVDITEHCH) the chain is Cytoplasmic. Cysteine 186 is subject to Cysteine sulfenic acid (-SOH).

It belongs to the copper transporter (Ctr) (TC 1.A.56) family. SLC31A subfamily. Homotrimer; is stabilized by cisplatin via interactions between cisplatin and the methionine-rich clusters, and could be crucial for the copper(2+) reduction process and copper(1+) stabilization. Heterotrimer between SLC31A1, CCS and SOD1; this heterotrimer is copper(1+)-mediated and its maintenance is regulated through SOD1 activation. Interacts with KDR; this interaction is induced upon VEGFA stimulation leading to SLC31A1 and KDR subsequent co-internalization to early endosomes, thereby activating KDR downstream signaling in endothelial cells. Interacts (via C-terminal domain) with ATOX1 (via dimer form); this interaction improves ATOX1 stability and controls intracellular copper(1+) levels. Interacts with SLC31A2; this interaction stabilizes SLC31A2 and protects its from ubiquitination and degradation. Interacts (via C-terminal domain) with CCS; this interaction is copper(1+)-mediated. Post-translationally, O-Glycosylation at Thr-30 protects from proteolytic cleavage in the N-terminal extracellular domain. In terms of processing, proteolytic cleavage, leading to a truncated form, is facilitated by SLC31A2 and initiated preferentially by CTSL and to a minor extend by CTSB in endolysosomal compartments. A post-CTSL/cathepsin L processing occurs to yield to the fully truncated form. Sulfenylated at Cys-186 after stimulation with VEGFA, which induces SLC31A1-KDR disulfide bond formation and their co-internalization to early endosomes, driving to a sustained VEGFR2 signaling.

The protein localises to the cell membrane. It is found in the early endosome membrane. Its subcellular location is the recycling endosome membrane. The protein resides in the apical cell membrane. It localises to the late endosome membrane. The protein localises to the basolateral cell membrane. It catalyses the reaction Cu(+)(out) = Cu(+)(in). The enzyme catalyses Ag(+)(out) = Ag(+)(in). Its activity is regulated as follows. Copper uptake is inhibited by cold temperature, silver and zinc ions. Platinum-containing chemotherapeutic agents uptake is inhibited by cold temperature and copper. Its function is as follows. Uniporter that mediates the transport of copper(1+) from the extracellular space to the cytoplasm, across the plasma membrane. Then, delivers directly copper(1+) to specific chaperone such as ATOX1, via a copper(1+)- mediated transient interaction between the C-terminal domain and a copper(1+) chaperone, thus controlling intracellular copper(1+) levels. May function in copper(1+) import from the apical membrane thus may drive intestinal copper absorption. The copper(1+) transport mechanism is sodium-independent, saturable and of high-affinity. Also mediates the uptake of silver(1+). May function in the influx of the platinum-containing chemotherapeutic agents. The platinum-containing chemotherapeutic agents uptake is saturable. Also participates in the first step of copper(2+) acquisition by cells through a direct transfer of copper(2+) from copper(2+) carriers in blood, such as ALB to the N-terminal domain of SLC31A1, leading to copper(2+) reduction and probably followed by copper(1+) stabilization. In addition, functions as a redox sensor to promote angiogenesis in endothelial cells, in a copper(1+) transport independent manner, by transmitting the VEGF-induced ROS signal through a sulfenylation at Cys-189 leading to a subsequent disulfide bond formation between SLC31A1 and KDR. The SLC31A1-KDR complex is then co-internalized to early endosomes, driving a sustained VEGFR2 signaling. In terms of biological role, mobilizes copper(1+) out of the endosomal compartment, making copper(1+) available for export out of the cells. The protein is High affinity copper uptake protein 1 of Rattus norvegicus (Rat).